The following is a 268-amino-acid chain: Tetraspanin-5 (268 aa).

Over 1–17 (MSGKHYKGPEVSCCIKY) the chain is Cytoplasmic. Residues 18-38 (FIFGFNVIFWFLGIAFLGIGL) traverse the membrane as a helical segment. Residues 39 to 61 (WAWNEKGVLSNISSITDLGGFDP) are Extracellular-facing. Residue Asn49 is glycosylated (N-linked (GlcNAc...) asparagine). A helical transmembrane segment spans residues 62–82 (VWLFLVVGGVMFILGFAGCIG). Residues 83-92 (ALRENTFLLK) lie on the Cytoplasmic side of the membrane. Residues 93–113 (FFSVFLGIIFFLELTAGVLAF) form a helical membrane-spanning segment. Over 114 to 232 (VFKDWIKDQL…PQFEKWLQDN (119 aa)) the chain is Extracellular. Intrachain disulfides connect Cys153–Cys221, Cys154–Cys186, Cys170–Cys180, and Cys187–Cys200. N-linked (GlcNAc...) asparagine glycosylation is found at Asn169 and Asn174. N-linked (GlcNAc...) asparagine glycosylation is present at Asn232. Residues 233–253 (LTIVAGIFIGIALLQIFGICL) form a helical membrane-spanning segment. The Cytoplasmic portion of the chain corresponds to 254–268 (AQNLVSDIEAVRASW).

Belongs to the tetraspanin (TM4SF) family. Interacts with ADAM10; the interaction influences ADAM10 substrate specificity, endocytosis and turnover. Post-translationally, palmitoylated.

It is found in the cell membrane. Its function is as follows. Part of TspanC8 subgroup, composed of 6 members that interact with the transmembrane metalloprotease ADAM10. This interaction is required for ADAM10 exit from the endoplasmic reticulum and for enzymatic maturation and trafficking to the cell surface as well as substrate specificity. Different TspanC8/ADAM10 complexes have distinct substrates. Promotes ADAM10-mediated cleavage of CD44. Seems to regulate VE-cadherin expression in endothelial cells probably through interaction with ADAM10, promoting leukocyte transmigration. This chain is Tetraspanin-5 (TSPAN5), found in Bos taurus (Bovine).